A 301-amino-acid chain; its full sequence is Probable alpha-L-glutamate ligase 1 (301 aa).

In terms of domain architecture, ATP-grasp spans 104–287 (MQLMSRRGIG…VAGAIIDFVE (184 aa)). ATP-binding positions include lysine 141, 178 to 179 (EY), aspartate 187, and 211 to 213 (RSN). Mg(2+) is bound by residues aspartate 248, glutamate 260, and asparagine 262. The Mn(2+) site is built by aspartate 248, glutamate 260, and asparagine 262.

Belongs to the RimK family. Mg(2+) serves as cofactor. It depends on Mn(2+) as a cofactor.

The chain is Probable alpha-L-glutamate ligase 1 from Shewanella baltica (strain OS185).